The chain runs to 1872 residues: E3 ubiquitin-protein ligase UBR2 (1872 aa).

The UBR-type zinc finger occupies 96–172 (TACTRLCFPS…DAFKCKNELN (77 aa)). A Glycyl lysine isopeptide (Lys-Gly) (interchain with G-Cter in ubiquitin) cross-link involves residue lysine 709. The interval 1134 to 1240 (RYLMETAPHV…SSNTINSCCD (107 aa)) is interaction with UBC2. The interval 1203-1227 (NNSVDTSDISTPRTTSPSLSPTRIN) is disordered. Over residues 1212 to 1225 (STPRTTSPSLSPTR) the composition is skewed to low complexity. Serine 1218 and serine 1222 each carry phosphoserine. The RING-type; atypical zinc-finger motif lies at 1241 to 1362 (DDCVFCKMPK…GLIYCPVCNS (122 aa)).

It belongs to the E3 ubiquitin-protein ligase UBR1-like family. In terms of assembly, interacts with MUB1, RPN4 and UBC2.

It is found in the cytoplasm. The catalysed reaction is S-ubiquitinyl-[E2 ubiquitin-conjugating enzyme]-L-cysteine + [acceptor protein]-L-lysine = [E2 ubiquitin-conjugating enzyme]-L-cysteine + N(6)-ubiquitinyl-[acceptor protein]-L-lysine.. It participates in protein modification; protein ubiquitination. In terms of biological role, E3 ubiquitin-protein ligase which probably functions outside the N-end rule pathway, since it lacks the residues essential for the degradation of N-end rule substrates. Mediates RPN4 ubiquitination and subsequent degradation. The protein is E3 ubiquitin-protein ligase UBR2 (UBR2) of Saccharomyces cerevisiae (strain ATCC 204508 / S288c) (Baker's yeast).